Consider the following 230-residue polypeptide: Ropporin-1-like protein (230 aa).

An RIIa domain is found at P17–F46.

This sequence belongs to the ropporin family. As to quaternary structure, component of the axonemal radial spoke complex 1 (RS1), at least composed of spoke head proteins RSPH1, RSPH3, RSPH9 and the cilia-specific component RSPH4A or sperm-specific component RSPH6A, spoke stalk proteins RSPH14, DNAJB13, DYDC1, ROPN1L and NME5, and the anchor protein IQUB. Interacts with FSCB; the interaction increases upon spermatozoa capacitation conditions. May interact with AKAP3. Interacts with CFAP61. In terms of processing, sumoylated, sumoylation decreases upon spermatozoa capacitation conditions.

The protein localises to the cell projection. Its subcellular location is the cilium. The protein resides in the flagellum. In terms of biological role, functions as part of axonemal radial spoke complexes that play an important part in the motility of sperm and cilia. Important for male fertility. With ROPN1, involved in fibrous sheath integrity and sperm motility, plays a role in PKA-dependent signaling processes required for spermatozoa capacitation. The sequence is that of Ropporin-1-like protein (ROPN1L) from Homo sapiens (Human).